Reading from the N-terminus, the 396-residue chain is S-adenosylmethionine synthase (396 aa).

H16 is a binding site for ATP. D18 contacts Mg(2+). Residue E44 coordinates K(+). 2 residues coordinate L-methionine: E57 and Q100. The segment at 100–110 (QSPDINQGVDR) is flexible loop. ATP is bound by residues 165 to 167 (DAK), 231 to 232 (KF), D240, 246 to 247 (RK), A263, and K267. D240 contributes to the L-methionine binding site. K271 is a binding site for L-methionine.

It belongs to the AdoMet synthase family. In terms of assembly, homotetramer; dimer of dimers. The cofactor is Mg(2+). Requires K(+) as cofactor.

The protein localises to the cytoplasm. The enzyme catalyses L-methionine + ATP + H2O = S-adenosyl-L-methionine + phosphate + diphosphate. The protein operates within amino-acid biosynthesis; S-adenosyl-L-methionine biosynthesis; S-adenosyl-L-methionine from L-methionine: step 1/1. In terms of biological role, catalyzes the formation of S-adenosylmethionine (AdoMet) from methionine and ATP. The overall synthetic reaction is composed of two sequential steps, AdoMet formation and the subsequent tripolyphosphate hydrolysis which occurs prior to release of AdoMet from the enzyme. This Ectopseudomonas mendocina (strain ymp) (Pseudomonas mendocina) protein is S-adenosylmethionine synthase.